The sequence spans 209 residues: Outer-membrane lipoprotein carrier protein (209 aa).

A signal peptide spans 1-21; that stretch reads MHRQLRYAVLATALFASTAFA.

It belongs to the LolA family. Monomer.

It localises to the periplasm. In terms of biological role, participates in the translocation of lipoproteins from the inner membrane to the outer membrane. Only forms a complex with a lipoprotein if the residue after the N-terminal Cys is not an aspartate (The Asp acts as a targeting signal to indicate that the lipoprotein should stay in the inner membrane). The polypeptide is Outer-membrane lipoprotein carrier protein (Xanthomonas oryzae pv. oryzae (strain MAFF 311018)).